We begin with the raw amino-acid sequence, 106 residues long: ATP-dependent Clp protease adapter protein ClpS (106 aa).

It belongs to the ClpS family. Binds to the N-terminal domain of the chaperone ClpA.

In terms of biological role, involved in the modulation of the specificity of the ClpAP-mediated ATP-dependent protein degradation. The polypeptide is ATP-dependent Clp protease adapter protein ClpS (Vibrio vulnificus (strain CMCP6)).